A 154-amino-acid polypeptide reads, in one-letter code: Urease accessory protein UreE (154 aa).

This sequence belongs to the UreE family.

It localises to the cytoplasm. Involved in urease metallocenter assembly. Binds nickel. Probably functions as a nickel donor during metallocenter assembly. This chain is Urease accessory protein UreE, found in Prochlorococcus marinus subsp. pastoris (strain CCMP1986 / NIES-2087 / MED4).